Here is a 351-residue protein sequence, read N- to C-terminus: Ferrochelatase (351 aa).

Fe cation contacts are provided by histidine 220 and glutamate 301.

It belongs to the ferrochelatase family.

Its subcellular location is the cytoplasm. It catalyses the reaction heme b + 2 H(+) = protoporphyrin IX + Fe(2+). It functions in the pathway porphyrin-containing compound metabolism; protoheme biosynthesis; protoheme from protoporphyrin-IX: step 1/1. Its function is as follows. Catalyzes the ferrous insertion into protoporphyrin IX. The polypeptide is Ferrochelatase (Rhodobacter capsulatus (Rhodopseudomonas capsulata)).